A 231-amino-acid chain; its full sequence is ATP phosphoribosyltransferase (231 aa).

This sequence belongs to the ATP phosphoribosyltransferase family. Short subfamily. Heteromultimer composed of HisG and HisZ subunits.

It localises to the cytoplasm. It carries out the reaction 1-(5-phospho-beta-D-ribosyl)-ATP + diphosphate = 5-phospho-alpha-D-ribose 1-diphosphate + ATP. The protein operates within amino-acid biosynthesis; L-histidine biosynthesis; L-histidine from 5-phospho-alpha-D-ribose 1-diphosphate: step 1/9. Functionally, catalyzes the condensation of ATP and 5-phosphoribose 1-diphosphate to form N'-(5'-phosphoribosyl)-ATP (PR-ATP). Has a crucial role in the pathway because the rate of histidine biosynthesis seems to be controlled primarily by regulation of HisG enzymatic activity. This is ATP phosphoribosyltransferase from Brucella suis biovar 1 (strain 1330).